The primary structure comprises 234 residues: tRNA1(Val) (adenine(37)-N6)-methyltransferase (234 aa).

This sequence belongs to the methyltransferase superfamily. tRNA (adenine-N(6)-)-methyltransferase family.

The protein localises to the cytoplasm. It catalyses the reaction adenosine(37) in tRNA1(Val) + S-adenosyl-L-methionine = N(6)-methyladenosine(37) in tRNA1(Val) + S-adenosyl-L-homocysteine + H(+). Its function is as follows. Specifically methylates the adenine in position 37 of tRNA(1)(Val) (anticodon cmo5UAC). In Phocaeicola vulgatus (strain ATCC 8482 / DSM 1447 / JCM 5826 / CCUG 4940 / NBRC 14291 / NCTC 11154) (Bacteroides vulgatus), this protein is tRNA1(Val) (adenine(37)-N6)-methyltransferase.